The following is a 296-amino-acid chain: ATP synthase gamma chain (296 aa).

It belongs to the ATPase gamma chain family. As to quaternary structure, F-type ATPases have 2 components, CF(1) - the catalytic core - and CF(0) - the membrane proton channel. CF(1) has five subunits: alpha(3), beta(3), gamma(1), delta(1), epsilon(1). CF(0) has three main subunits: a, b and c.

The protein localises to the cell inner membrane. Its function is as follows. Produces ATP from ADP in the presence of a proton gradient across the membrane. The gamma chain is believed to be important in regulating ATPase activity and the flow of protons through the CF(0) complex. This Jannaschia sp. (strain CCS1) protein is ATP synthase gamma chain.